The chain runs to 56 residues: Cruciferin (56 aa).

Residue Thr-45 is modified to Phosphothreonine.

This sequence belongs to the 11S seed storage protein (globulins) family. In terms of assembly, hexamer; each subunit is composed of an acidic and a basic chain derived from a single precursor and linked by a disulfide bond.

Its function is as follows. This is a seed storage protein. This is Cruciferin from Sinapis alba (White mustard).